A 264-amino-acid polypeptide reads, in one-letter code: ATP synthase subunit a (264 aa).

5 helical membrane-spanning segments follow: residues 39 to 59 (LDTL…FYIV), 97 to 117 (VAPL…MDLV), 139 to 159 (TADP…VIFY), 205 to 225 (LFGN…LPWW), and 239 to 259 (LLVI…YISL).

It belongs to the ATPase A chain family. F-type ATPases have 2 components, CF(1) - the catalytic core - and CF(0) - the membrane proton channel. CF(1) has five subunits: alpha(3), beta(3), gamma(1), delta(1), epsilon(1). CF(0) has three main subunits: a(1), b(2) and c(9-12). The alpha and beta chains form an alternating ring which encloses part of the gamma chain. CF(1) is attached to CF(0) by a central stalk formed by the gamma and epsilon chains, while a peripheral stalk is formed by the delta and b chains.

It localises to the cell inner membrane. Key component of the proton channel; it plays a direct role in the translocation of protons across the membrane. The sequence is that of ATP synthase subunit a from Coxiella burnetii (strain RSA 331 / Henzerling II).